The primary structure comprises 310 residues: Phytoene synthase 2, chloroplastic (310 aa).

Residues 1–25 (DPDIVLPGNLGLLSEAYDRCGEVCA) constitute a chloroplast transit peptide.

Belongs to the phytoene/squalene synthase family. Monomer.

The protein localises to the plastid. The protein resides in the chloroplast. It carries out the reaction 2 (2E,6E,10E)-geranylgeranyl diphosphate = 15-cis-phytoene + 2 diphosphate. Its pathway is carotenoid biosynthesis; phytoene biosynthesis; all-trans-phytoene from geranylgeranyl diphosphate: step 1/1. Catalyzes the reaction from prephytoene diphosphate to phytoene. The sequence is that of Phytoene synthase 2, chloroplastic (PSY2) from Solanum lycopersicum (Tomato).